A 276-amino-acid chain; its full sequence is Src-like-adapter (276 aa).

Gly2 carries the N-myristoyl glycine lipid modification. In terms of domain architecture, SH3 spans Leu22–His82. The SH2 domain maps to Trp84 to Cys175. The segment at Glu212–Asp276 is SLA C-terminal. A Phosphoserine modification is found at Ser253. Tyr273 is modified (phosphotyrosine).

As to quaternary structure, interacts with EPHA2, VAV1, LCP2 and PDGFRB. Homodimer. Homodimerization and interaction with phosphorylated CBL occurs via its C-terminal domain. Interacts with phosphorylated proteins ZAP70, CD3Z, SYK and LAT via its SH2 domain. In terms of tissue distribution, expressed in lung and fetal brain. Weakly expressed in heart, adult brain, placenta, liver, skeletal muscle, kidney and pancreas.

Its subcellular location is the cytoplasm. It is found in the endosome. Adapter protein, which negatively regulates T-cell receptor (TCR) signaling. Inhibits T-cell antigen-receptor induced activation of nuclear factor of activated T-cells. Involved in the negative regulation of positive selection and mitosis of T-cells. May act by linking signaling proteins such as ZAP70 with CBL, leading to a CBL dependent degradation of signaling proteins. The chain is Src-like-adapter (SLA) from Homo sapiens (Human).